A 619-amino-acid polypeptide reads, in one-letter code: Zinc finger protein 131 (619 aa).

One can recognise a BTB domain in the interval 34–98 (TDITLIVDGH…TYTAKLMIQG (65 aa)). A Nuclear localization signal 1 motif is present at residues 137–148 (TGKNEAKKRKIA). Ser231 carries the post-translational modification Phosphoserine. C2H2-type zinc fingers lie at residues 261 to 283 (FHCE…MKSH), 288 to 311 (FKCE…NCYH), and 328 to 350 (HICQ…LRKH). Glycyl lysine isopeptide (Lys-Gly) (interchain with G-Cter in SUMO2) cross-links involve residues Lys289 and Lys295. Residues 317-328 (VSKKQRTGKKIH) carry the Nuclear localization signal 2 motif. The C2H2-type 4; degenerate zinc finger occupies 356-381 (FECSNCHERFARNSTLKCHLTACQTG). 2 consecutive C2H2-type zinc fingers follow at residues 392 to 414 (YECQ…LVIH) and 420 to 443 (NHCT…SDAH). Basic and acidic residues-rich tracts occupy residues 574–587 (QEER…AAME) and 595–612 (LETK…ENDR). The disordered stretch occupies residues 574 to 619 (QEEREPNHADAAMEEHEDAEGLETKPSEYSQARKTENDRTSLPVLE). Lys598 is covalently cross-linked (Glycyl lysine isopeptide (Lys-Gly) (interchain with G-Cter in SUMO)).

This sequence belongs to the krueppel C2H2-type zinc-finger protein family. Monosumoylated at Lys-598 by CBX4 and UHRF2. Sumoylation may potentiate ZNF131 inhibition of estrogen signaling. Sumoylation does not interfere with ubiquitination. In terms of processing, ubiquitinated. As to expression, ubiquitously expressed. Predominant expression is found in the developing central nervous system with strongest signals in the forebrain, midbrain, and hindbrain areas and in the neural tube.

The protein localises to the nucleus. Functionally, may be involved in transcriptional regulation as a repressor of ESR1/ER-alpha signaling. Plays a role during development and organogenesis as well as in the function of the adult central nervous system. The protein is Zinc finger protein 131 (Znf131) of Mus musculus (Mouse).